A 628-amino-acid chain; its full sequence is Biosynthetic arginine decarboxylase (628 aa).

Position 99 is an N6-(pyridoxal phosphate)lysine (Lys99). 279 to 289 (VDVGGGLGIDY) lines the substrate pocket.

Belongs to the Orn/Lys/Arg decarboxylase class-II family. SpeA subfamily. The cofactor is Mg(2+). Pyridoxal 5'-phosphate serves as cofactor.

The catalysed reaction is L-arginine + H(+) = agmatine + CO2. Its function is as follows. Catalyzes the biosynthesis of agmatine from arginine. The polypeptide is Biosynthetic arginine decarboxylase (Xanthomonas campestris pv. campestris (strain ATCC 33913 / DSM 3586 / NCPPB 528 / LMG 568 / P 25)).